Reading from the N-terminus, the 467-residue chain is UDP-N-acetylmuramate--L-alanine ligase (467 aa).

Glycine 121–threonine 127 is a binding site for ATP.

This sequence belongs to the MurCDEF family.

The protein localises to the cytoplasm. The catalysed reaction is UDP-N-acetyl-alpha-D-muramate + L-alanine + ATP = UDP-N-acetyl-alpha-D-muramoyl-L-alanine + ADP + phosphate + H(+). It participates in cell wall biogenesis; peptidoglycan biosynthesis. Functionally, cell wall formation. This Parasynechococcus marenigrum (strain WH8102) protein is UDP-N-acetylmuramate--L-alanine ligase.